The primary structure comprises 354 residues: Phosphoribosylformylglycinamidine cyclo-ligase (354 aa).

Belongs to the AIR synthase family.

The protein resides in the cytoplasm. The enzyme catalyses 2-formamido-N(1)-(5-O-phospho-beta-D-ribosyl)acetamidine + ATP = 5-amino-1-(5-phospho-beta-D-ribosyl)imidazole + ADP + phosphate + H(+). The protein operates within purine metabolism; IMP biosynthesis via de novo pathway; 5-amino-1-(5-phospho-D-ribosyl)imidazole from N(2)-formyl-N(1)-(5-phospho-D-ribosyl)glycinamide: step 2/2. The polypeptide is Phosphoribosylformylglycinamidine cyclo-ligase (Marinobacter nauticus (strain ATCC 700491 / DSM 11845 / VT8) (Marinobacter aquaeolei)).